The sequence spans 257 residues: Folate receptor alpha (257 aa).

The first 24 residues, 1–24 (MAQRMTTQLLLLLVWVAVVGEAQT), serve as a signal peptide directing secretion. Cystine bridges form between Cys-37/Cys-65, Cys-57/Cys-105, Cys-66/Cys-109, Cys-89/Cys-175, Cys-96/Cys-146, Cys-135/Cys-209, Cys-139/Cys-189, and Cys-152/Cys-169. A glycan (N-linked (GlcNAc...) asparagine) is linked at Asn-69. Folate contacts are provided by residues Asp-103, Tyr-107, 124–128 (WRKER), 157–162 (HKGWNW), and Ser-196. Asn-161 carries N-linked (GlcNAc...) asparagine glycosylation. The N-linked (GlcNAc...) asparagine glycan is linked to Asn-201. A lipid anchor (GPI-anchor amidated serine) is attached at Ser-234. Residues 235–257 (GAGPWAAWPFLLSLALMLLWLLS) constitute a propeptide, removed in mature form.

It belongs to the folate receptor family. Post-translationally, the secreted form is derived from the membrane-bound form either by cleavage of the GPI anchor, or/and by proteolysis catalyzed by a metalloprotease. In terms of tissue distribution, primarily expressed in tissues of epithelial origin. Expression is increased in malignant tissues. Expressed in kidney, lung and cerebellum. Detected in placenta and thymus epithelium.

The protein localises to the cell membrane. It is found in the apical cell membrane. Its subcellular location is the basolateral cell membrane. The protein resides in the secreted. It localises to the cytoplasmic vesicle. The protein localises to the clathrin-coated vesicle. It is found in the endosome. Functionally, binds to folate and reduced folic acid derivatives and mediates delivery of 5-methyltetrahydrofolate and folate analogs into the interior of cells. Has high affinity for folate and folic acid analogs at neutral pH. Exposure to slightly acidic pH after receptor endocytosis triggers a conformation change that strongly reduces its affinity for folates and mediates their release. Required for normal embryonic development and normal cell proliferation. The polypeptide is Folate receptor alpha (FOLR1) (Homo sapiens (Human)).